Reading from the N-terminus, the 266-residue chain is Small ribosomal subunit protein uS2 (266 aa).

This sequence belongs to the universal ribosomal protein uS2 family.

In Corynebacterium diphtheriae (strain ATCC 700971 / NCTC 13129 / Biotype gravis), this protein is Small ribosomal subunit protein uS2.